Reading from the N-terminus, the 254-residue chain is 5'-nucleotidase SurE (254 aa).

Residues aspartate 8, aspartate 9, serine 39, and asparagine 91 each coordinate a divalent metal cation.

This sequence belongs to the SurE nucleotidase family. It depends on a divalent metal cation as a cofactor.

It is found in the cytoplasm. It catalyses the reaction a ribonucleoside 5'-phosphate + H2O = a ribonucleoside + phosphate. In terms of biological role, nucleotidase that shows phosphatase activity on nucleoside 5'-monophosphates. This is 5'-nucleotidase SurE from Methylibium petroleiphilum (strain ATCC BAA-1232 / LMG 22953 / PM1).